A 305-amino-acid polypeptide reads, in one-letter code: Glycine--tRNA ligase alpha subunit (305 aa).

It belongs to the class-II aminoacyl-tRNA synthetase family. Tetramer of two alpha and two beta subunits.

The protein localises to the cytoplasm. It carries out the reaction tRNA(Gly) + glycine + ATP = glycyl-tRNA(Gly) + AMP + diphosphate. The sequence is that of Glycine--tRNA ligase alpha subunit from Streptococcus pneumoniae (strain ATCC 700669 / Spain 23F-1).